Reading from the N-terminus, the 343-residue chain is Dihydroorotate dehydrogenase (quinone) (343 aa).

FMN is bound by residues 61–65 (AGLDK) and T85. K65 contacts substrate. 110–114 (NRMGF) contacts substrate. Positions 138 and 171 each coordinate FMN. N171 contacts substrate. Catalysis depends on S174, which acts as the Nucleophile. Substrate is bound at residue N176. 2 residues coordinate FMN: K216 and T244. 245–246 (NT) serves as a coordination point for substrate. Residues G267, G296, and 317–318 (YS) contribute to the FMN site.

The protein belongs to the dihydroorotate dehydrogenase family. Type 2 subfamily. In terms of assembly, monomer. Requires FMN as cofactor.

It is found in the cell membrane. The catalysed reaction is (S)-dihydroorotate + a quinone = orotate + a quinol. It functions in the pathway pyrimidine metabolism; UMP biosynthesis via de novo pathway; orotate from (S)-dihydroorotate (quinone route): step 1/1. Its function is as follows. Catalyzes the conversion of dihydroorotate to orotate with quinone as electron acceptor. The chain is Dihydroorotate dehydrogenase (quinone) from Pseudomonas syringae pv. tomato (strain ATCC BAA-871 / DC3000).